The sequence spans 185 residues: Ribosome-recycling factor (185 aa).

Belongs to the RRF family.

It is found in the cytoplasm. Responsible for the release of ribosomes from messenger RNA at the termination of protein biosynthesis. May increase the efficiency of translation by recycling ribosomes from one round of translation to another. The chain is Ribosome-recycling factor from Campylobacter hominis (strain ATCC BAA-381 / DSM 21671 / CCUG 45161 / LMG 19568 / NCTC 13146 / CH001A).